Consider the following 431-residue polypeptide: UDP-N-acetylglucosamine--N-acetylmuramyl-(pentapeptide) pyrophosphoryl-undecaprenol N-acetylglucosamine transferase (431 aa).

UDP-N-acetyl-alpha-D-glucosamine is bound by residues 29 to 31 (TGG), Asn-141, Arg-177, Ser-205, Ile-258, and Gln-303. The interval 370-431 (AGSGDGQPPA…NPGASAGGAP (62 aa)) is disordered. Residues 395-420 (KQGSMQTSVNGDRSAQLIATNPQSRL) are compositionally biased toward polar residues.

It belongs to the glycosyltransferase 28 family. MurG subfamily.

The protein localises to the cell inner membrane. It carries out the reaction di-trans,octa-cis-undecaprenyl diphospho-N-acetyl-alpha-D-muramoyl-L-alanyl-D-glutamyl-meso-2,6-diaminopimeloyl-D-alanyl-D-alanine + UDP-N-acetyl-alpha-D-glucosamine = di-trans,octa-cis-undecaprenyl diphospho-[N-acetyl-alpha-D-glucosaminyl-(1-&gt;4)]-N-acetyl-alpha-D-muramoyl-L-alanyl-D-glutamyl-meso-2,6-diaminopimeloyl-D-alanyl-D-alanine + UDP + H(+). It participates in cell wall biogenesis; peptidoglycan biosynthesis. Cell wall formation. Catalyzes the transfer of a GlcNAc subunit on undecaprenyl-pyrophosphoryl-MurNAc-pentapeptide (lipid intermediate I) to form undecaprenyl-pyrophosphoryl-MurNAc-(pentapeptide)GlcNAc (lipid intermediate II). The chain is UDP-N-acetylglucosamine--N-acetylmuramyl-(pentapeptide) pyrophosphoryl-undecaprenol N-acetylglucosamine transferase from Xanthomonas euvesicatoria pv. vesicatoria (strain 85-10) (Xanthomonas campestris pv. vesicatoria).